Here is a 299-residue protein sequence, read N- to C-terminus: Coenzyme PQQ synthesis protein B (299 aa).

It belongs to the PqqB family.

The protein operates within cofactor biosynthesis; pyrroloquinoline quinone biosynthesis. Functionally, may be involved in the transport of PQQ or its precursor to the periplasm. The sequence is that of Coenzyme PQQ synthesis protein B from Xanthomonas campestris pv. campestris (strain 8004).